The sequence spans 422 residues: MATSAMFILDLKGKTIISRNYRGDIDMTAIDKFIHLLMEKEEEGSAAPVLTYQDTNFVFIKHTNIYLVSACRSNVNVTMILSFLYKCVEVFSEYFKDVEEESVRDNFVVIYELLDEMMDFGFPQTTESRILQEYITQEGQKLISAPRPPMAVTNAVSWRSEGIKYRKNEVFLDVIESVNMLASANGTVLQSEIVGSVKMRVYLTGMPELRLGLNDKVLFEGSGRGKSKSVELEDVKFHQCVRLSRFDTDRTISFIPPDGAFELMSYRLTTVVKPLIWIETSIERHSHSRVSFIIKAKSQFKRRSTANNVEIIIPVPSDADSPKFKTSIGSVKYTPEQSAFVWTIKNFPGGKEYLLTAHLSLPSVMSEESEGRPPIKVKFEIPYFTTSGIQVRYLKIIEKSGYQALPWVRYITQNGEYEMRMK.

The MHD domain occupies 167–420 (KNEVFLDVIE…ITQNGEYEMR (254 aa)).

The protein belongs to the adaptor complexes medium subunit family. As to quaternary structure, adaptor protein complex 1 (AP-1) is a heterotetramer composed of two large adaptins (gamma- and beta'-type subunits), a medium adaptin (mu-type subunit AP47) and a small adaptin (sigma-type subunit AP19). Interacts (via N-terminus) with kvs-4. Expressed in the cholinergic motor neuron DA9.

It is found in the golgi apparatus. The protein localises to the cytoplasmic vesicle. It localises to the clathrin-coated vesicle membrane. The protein resides in the cell projection. Its subcellular location is the dendrite. Functionally, component of the adaptor complexes which link clathrin to receptors in coated vesicles. Clathrin-associated protein complexes are believed to interact with the cytoplasmic tails of membrane proteins, leading to their selection and concentration. Required for many aspects of development and behavior, including negative regulation of vulval differentiation. Required for the dendritic localization of potassium channel kvs-4 in the cholinergic motor neuron DA9. The protein is AP-1 complex subunit mu-1-I (unc-101) of Caenorhabditis elegans.